The sequence spans 61 residues: Metallothionein-1 (61 aa).

An N-acetylmethionine modification is found at Met-1. The segment at 1-29 is beta; it reads MDPNCSCSTGGSCTCTSSCACKNCKCTSC. Positions 5, 7, 13, 15, 19, 21, 24, 26, 29, 33, 34, 36, 37, 41, 44, 48, 50, 57, 59, and 60 each coordinate a divalent metal cation. The alpha stretch occupies residues 30-61; it reads KKSCCSCCPVGCSKCAQGCVCKGAADKCTCCA.

The protein belongs to the metallothionein superfamily. Type 1 family.

In terms of biological role, metallothioneins have a high content of cysteine residues that bind various heavy metals; these proteins are transcriptionally regulated by both heavy metals and glucocorticoids. The protein is Metallothionein-1 (Mt1) of Mus musculus (Mouse).